The chain runs to 127 residues: MPKSKELVSSSSSGSDSDSEVEKKLKRKKQVVPEKPVKKQKPGESSRALASSKQSSSSRDDNMFQIGKMRYVSVRDFKGKILIDIREYWMDSEGEMKPGRKGISLNMEQWSQLKEQISDIDDAVRKL.

Residues 1–50 (MPKSKELVSSSSSGSDSDSEVEKKLKRKKQVVPEKPVKKQKPGESSRALA) are regulatory. Residues 1–62 (MPKSKELVSS…KQSSSSRDDN (62 aa)) are disordered. A phosphoserine mark is found at Ser-4, Ser-9, Ser-10, Ser-11, Ser-13, Ser-15, Ser-17, and Ser-19. The span at 7 to 16 (LVSSSSSGSD) shows a compositional bias: low complexity. The span at 31 to 44 (VVPEKPVKKQKPGE) shows a compositional bias: basic and acidic residues. An N6-acetyllysine mark is found at Lys-35 and Lys-53. Residues 45-57 (SSRALASSKQSSS) show a composition bias toward low complexity. Phosphoserine occurs at positions 55, 56, 57, and 58. Position 68 is an N6-acetyllysine; alternate (Lys-68). Residue Lys-68 forms a Glycyl lysine isopeptide (Lys-Gly) (interchain with G-Cter in SUMO1); alternate linkage. Lys-68 is covalently cross-linked (Glycyl lysine isopeptide (Lys-Gly) (interchain with G-Cter in SUMO2); alternate). Positions 77 to 101 (FKGKILIDIREYWMDSEGEMKPGRK) are interaction with ssDNA. At Ser-118 the chain carries Phosphoserine.

This sequence belongs to the transcriptional coactivator PC4 family. As to quaternary structure, homodimer. Interacts with CSTF2. Activity is controlled by protein kinases that target the regulatory region. Phosphorylation inactivates both ds DNA-binding and cofactor function, but does not affect binding to ssDNA.

The protein localises to the nucleus. Its function is as follows. General coactivator that functions cooperatively with TAFs and mediates functional interactions between upstream activators and the general transcriptional machinery. May be involved in stabilizing the multiprotein transcription complex. Binds single-stranded DNA. Also binds, in vitro, non-specifically to double-stranded DNA (ds DNA). The polypeptide is Activated RNA polymerase II transcriptional coactivator p15 (Sub1) (Rattus norvegicus (Rat)).